Reading from the N-terminus, the 86-residue chain is Small ribosomal subunit protein uS17 (86 aa).

It belongs to the universal ribosomal protein uS17 family. As to quaternary structure, part of the 30S ribosomal subunit.

In terms of biological role, one of the primary rRNA binding proteins, it binds specifically to the 5'-end of 16S ribosomal RNA. The polypeptide is Small ribosomal subunit protein uS17 (Bifidobacterium longum (strain DJO10A)).